The following is a 206-amino-acid chain: 3-demethoxyubiquinol 3-hydroxylase (206 aa).

Glu-55, Glu-85, His-88, Glu-137, Glu-169, and His-172 together coordinate Fe cation.

Belongs to the COQ7 family. Requires Fe cation as cofactor.

It localises to the cell membrane. It catalyses the reaction a 5-methoxy-2-methyl-3-(all-trans-polyprenyl)benzene-1,4-diol + AH2 + O2 = a 3-demethylubiquinol + A + H2O. Its pathway is cofactor biosynthesis; ubiquinone biosynthesis. In terms of biological role, catalyzes the hydroxylation of 2-nonaprenyl-3-methyl-6-methoxy-1,4-benzoquinol during ubiquinone biosynthesis. The protein is 3-demethoxyubiquinol 3-hydroxylase of Chromobacterium violaceum (strain ATCC 12472 / DSM 30191 / JCM 1249 / CCUG 213 / NBRC 12614 / NCIMB 9131 / NCTC 9757 / MK).